A 53-amino-acid chain; its full sequence is Conotoxin-like peptide 1 (53 aa).

A signal peptide spans 1-18 (MGVKSALFIMAVFAAANV). Intrachain disulfides connect cysteine 25-cysteine 39, cysteine 32-cysteine 43, and cysteine 38-cysteine 50.

It is found in the secreted. In Orgyia pseudotsugata multicapsid polyhedrosis virus (OpMNPV), this protein is Conotoxin-like peptide 1 (CTL-1).